A 227-amino-acid polypeptide reads, in one-letter code: 2,3-bisphosphoglycerate-dependent phosphoglycerate mutase (227 aa).

Substrate-binding positions include 7–14, 20–21, Arg-59, 86–89, Lys-97, 113–114, and 182–183; these read RHGQSEWN, TG, ERHY, RR, and GN. Residue His-8 is the Tele-phosphohistidine intermediate of the active site. The active-site Proton donor/acceptor is the Glu-86.

This sequence belongs to the phosphoglycerate mutase family. BPG-dependent PGAM subfamily. In terms of assembly, homodimer.

It carries out the reaction (2R)-2-phosphoglycerate = (2R)-3-phosphoglycerate. The protein operates within carbohydrate degradation; glycolysis; pyruvate from D-glyceraldehyde 3-phosphate: step 3/5. Its function is as follows. Catalyzes the interconversion of 2-phosphoglycerate and 3-phosphoglycerate. The polypeptide is 2,3-bisphosphoglycerate-dependent phosphoglycerate mutase (Neisseria meningitidis serogroup C / serotype 2a (strain ATCC 700532 / DSM 15464 / FAM18)).